The primary structure comprises 331 residues: Aromatic 2-oxoacid reductase (331 aa).

Residues 154–155 (RI), Asp175, 205–206 (AP), Asn211, 232–234 (AAR), and Asp258 contribute to the NAD(+) site. Arg234 is an active-site residue. Residue Glu263 is part of the active site. His295 acts as the Proton donor in catalysis.

The protein belongs to the D-isomer specific 2-hydroxyacid dehydrogenase family.

The catalysed reaction is (R)-3-phenyllactate + NAD(+) = 3-phenylpyruvate + NADH + H(+). It carries out the reaction (2R)-2-hydroxy-3-(4-hydroxyphenyl)propanoate + NAD(+) = 3-(4-hydroxyphenyl)pyruvate + NADH + H(+). It catalyses the reaction 3-(indol-3-yl)lactate + NAD(+) = indole-3-pyruvate + NADH + H(+). It participates in amino-acid degradation. In terms of biological role, essential for the reductive metabolism of L-phenylalanine, L-tyrosine and L-tryptophan. Catalyzes the conversion of phenylpyruvic acid to phenyllactic acid, 4-hydroxy-phenylpyruvic acid to 4-hydroxy-phenyllactic acid, and indolepyruvic acid to indolelactic acid. This Clostridium sporogenes (strain ATCC 15579) protein is Aromatic 2-oxoacid reductase.